Consider the following 456-residue polypeptide: Proline-specific permease ProY (456 aa).

At 1–17 (MESNNKLKRGLSTRHIR) the chain is on the cytoplasmic side. Transmembrane regions (helical) follow at residues 18–38 (FMAL…DAIK) and 39–59 (MAGP…YIIM). Residues 60–95 (RALGEMSVHNPAASSFSRYAQENLGPLAGYITGWTY) lie on the Cytoplasmic side of the membrane. 2 helical membrane-spanning segments follow: residues 96 to 116 (CFEI…YMGV) and 117 to 137 (WFPA…ICAI). The Cytoplasmic segment spans residues 138-156 (NLMSVKVFGELEFWFSFFK). Residues 157–177 (VATIIIMIVAGIGIIVWGIGN) traverse the membrane as a helical segment. Topologically, residues 178 to 197 (GGQPTGIHNLWSNGGFFSNG) are periplasmic. The helical transmembrane segment at 198–218 (WLGMIMSLQMVMFAYGGIEII) threads the bilayer. The Cytoplasmic segment spans residues 219–242 (GITAGEAKDPEKSIPRAINSVPMR). Residues 243–263 (ILVFYVGTLFVIMSIYPWNQV) form a helical membrane-spanning segment. Topologically, residues 264–277 (GTNGSPFVLTFQHM) are periplasmic. The chain crosses the membrane as a helical span at residues 278 to 298 (GITFAASILNFVVLTASLSAI). The Cytoplasmic segment spans residues 299–331 (NSDVFGVGRMLHGMAEQGSAPKVFAKTSRRGIP). Residues 332 to 352 (WVTVLVMTIALLFAVYLNYIM) form a helical membrane-spanning segment. The Periplasmic segment spans residues 353–355 (PEN). Residues 356 to 376 (VFLVIASLATFATVWVWIMIL) traverse the membrane as a helical segment. Over 377 to 399 (LSQIAFRRRLPPEEVKALKFKVP) the chain is Cytoplasmic. Residues 400 to 420 (GGVVTTIAGLIFLVFIIALIG) form a helical membrane-spanning segment. The Periplasmic segment spans residues 421-424 (YHPD). The helical transmembrane segment at 425–445 (TRISLYVGFAWIVLLLIGWIF) threads the bilayer. The Cytoplasmic segment spans residues 446 to 456 (KRRRDRQLAQA).

Belongs to the amino acid-polyamine-organocation (APC) superfamily. Amino acid transporter (AAT) (TC 2.A.3.1) family.

The protein resides in the cell inner membrane. Functionally, permease that is involved in the transport across the cytoplasmic membrane of proline. In Salmonella typhimurium (strain LT2 / SGSC1412 / ATCC 700720), this protein is Proline-specific permease ProY (proY).